The following is a 151-amino-acid chain: UPF0178 protein YaiI (151 aa).

It belongs to the UPF0178 family.

This Salmonella choleraesuis (strain SC-B67) protein is UPF0178 protein YaiI.